We begin with the raw amino-acid sequence, 193 residues long: Holliday junction branch migration complex subunit RuvA (193 aa).

The tract at residues 1-64 (MIGRIAGTLI…EDAHLLYGFG (64 aa)) is domain I. Residues 65–143 (TASERNTFRE…AELGHVPGTP (79 aa)) are domain II. The interval 144–151 (AVPDSAVD) is flexible linker. Residues 151 to 193 (DVLNALLALGYSEKEAAAAIKQVPAGTGVSDGIKLALKALSKA) form a domain III region.

This sequence belongs to the RuvA family. In terms of assembly, homotetramer. Forms an RuvA(8)-RuvB(12)-Holliday junction (HJ) complex. HJ DNA is sandwiched between 2 RuvA tetramers; dsDNA enters through RuvA and exits via RuvB. An RuvB hexamer assembles on each DNA strand where it exits the tetramer. Each RuvB hexamer is contacted by two RuvA subunits (via domain III) on 2 adjacent RuvB subunits; this complex drives branch migration. In the full resolvosome a probable DNA-RuvA(4)-RuvB(12)-RuvC(2) complex forms which resolves the HJ.

It localises to the cytoplasm. Functionally, the RuvA-RuvB-RuvC complex processes Holliday junction (HJ) DNA during genetic recombination and DNA repair, while the RuvA-RuvB complex plays an important role in the rescue of blocked DNA replication forks via replication fork reversal (RFR). RuvA specifically binds to HJ cruciform DNA, conferring on it an open structure. The RuvB hexamer acts as an ATP-dependent pump, pulling dsDNA into and through the RuvAB complex. HJ branch migration allows RuvC to scan DNA until it finds its consensus sequence, where it cleaves and resolves the cruciform DNA. This is Holliday junction branch migration complex subunit RuvA from Cupriavidus necator (strain ATCC 17699 / DSM 428 / KCTC 22496 / NCIMB 10442 / H16 / Stanier 337) (Ralstonia eutropha).